We begin with the raw amino-acid sequence, 200 residues long: Cytochrome c biogenesis ATP-binding export protein CcmA (200 aa).

Residues 2-200 (LDVIELDFDY…NKADYEEYHL (199 aa)) form the ABC transporter domain. Position 34–41 (34–41 (GSNGAGKT)) interacts with ATP.

The protein belongs to the ABC transporter superfamily. CcmA exporter (TC 3.A.1.107) family. As to quaternary structure, the complex is composed of two ATP-binding proteins (CcmA) and two transmembrane proteins (CcmB).

The protein resides in the cell inner membrane. The enzyme catalyses heme b(in) + ATP + H2O = heme b(out) + ADP + phosphate + H(+). In terms of biological role, part of the ABC transporter complex CcmAB involved in the biogenesis of c-type cytochromes; once thought to export heme, this seems not to be the case, but its exact role is uncertain. Responsible for energy coupling to the transport system. The chain is Cytochrome c biogenesis ATP-binding export protein CcmA from Legionella pneumophila (strain Paris).